Reading from the N-terminus, the 423-residue chain is Putative UPF0496 protein 5 (423 aa).

Over residues 1 to 14 (MGNRHGIMRPRRLA) the composition is skewed to basic residues. Residues 1–37 (MGNRHGIMRPRRLASGRSAAEEEEDGEGEPGSYEAAC) form a disordered region. The next 2 membrane-spanning stretches (helical) occupy residues 224-244 (IVFL…AAIA) and 247-267 (PVAA…GKWM).

Belongs to the UPF0496 family.

The protein localises to the membrane. The protein is Putative UPF0496 protein 5 of Oryza sativa subsp. japonica (Rice).